The sequence spans 130 residues: Peptidyl-prolyl cis-trans isomerase pin4 (130 aa).

The disordered stretch occupies residues 1 to 38; that stretch reads MGKDKKASGSGSGSKGGKDAGNKDAGKDAGKASKGAQS. The span at 16-31 shows a compositional bias: basic and acidic residues; it reads GGKDAGNKDAGKDAGK. The PpiC domain occupies 36 to 128; that stretch reads AQSINVRHIL…FGYHIIMVEG (93 aa).

The protein belongs to the PpiC/parvulin rotamase family. PIN4 subfamily.

The catalysed reaction is [protein]-peptidylproline (omega=180) = [protein]-peptidylproline (omega=0). PPIases accelerate the folding of proteins. It catalyzes the cis-trans isomerization of proline imidic peptide bonds in oligopeptides. This is Peptidyl-prolyl cis-trans isomerase pin4 (ppi-5) from Neurospora crassa (strain ATCC 24698 / 74-OR23-1A / CBS 708.71 / DSM 1257 / FGSC 987).